We begin with the raw amino-acid sequence, 340 residues long: NAC domain-containing protein 89 (340 aa).

An NAC domain is found at valine 21 to asparagine 164. A DNA-binding region spans residues isoleucine 119–glycine 170. A compositionally biased stretch (polar residues) spans tyrosine 167–serine 181. A disordered region spans residues tyrosine 167 to proline 198.

Interacts with PAS1.

It is found in the cytoplasm. Its subcellular location is the nucleus. In terms of biological role, transcription factor involved in plant cell division. This is NAC domain-containing protein 89 (NAC089) from Arabidopsis thaliana (Mouse-ear cress).